We begin with the raw amino-acid sequence, 79 residues long: Acyl carrier protein (79 aa).

Residues 2–77 form the Carrier domain; that stretch reads SNIEERVKKI…QAIDYINAHA (76 aa). An O-(pantetheine 4'-phosphoryl)serine modification is found at S37.

This sequence belongs to the acyl carrier protein (ACP) family. 4'-phosphopantetheine is transferred from CoA to a specific serine of apo-ACP by AcpS. This modification is essential for activity because fatty acids are bound in thioester linkage to the sulfhydryl of the prosthetic group.

Its subcellular location is the cytoplasm. It functions in the pathway lipid metabolism; fatty acid biosynthesis. Carrier of the growing fatty acid chain in fatty acid biosynthesis. The polypeptide is Acyl carrier protein (Thioalkalivibrio sulfidiphilus (strain HL-EbGR7)).